The primary structure comprises 213 residues: Small ribosomal subunit protein eS1 (213 aa).

Residues 189-213 (ARPEEVAAEEETAVDVDEEDVDVEA) form a disordered region. The span at 194–213 (VAAEEETAVDVDEEDVDVEA) shows a compositional bias: acidic residues.

The protein belongs to the eukaryotic ribosomal protein eS1 family.

The polypeptide is Small ribosomal subunit protein eS1 (Haloarcula marismortui (strain ATCC 43049 / DSM 3752 / JCM 8966 / VKM B-1809) (Halobacterium marismortui)).